Here is a 127-residue protein sequence, read N- to C-terminus: Fluoride-specific ion channel FluC (127 aa).

4 helical membrane-spanning segments follow: residues 4-24 (LLLA…LLSM), 35-55 (LGTL…FAWF), 71-91 (TGFC…VFLL), and 103-123 (VFVN…LFSA). 2 residues coordinate Na(+): G75 and T78.

Belongs to the fluoride channel Fluc/FEX (TC 1.A.43) family.

Its subcellular location is the cell inner membrane. It catalyses the reaction fluoride(in) = fluoride(out). With respect to regulation, na(+) is not transported, but it plays an essential structural role and its presence is essential for fluoride channel function. In terms of biological role, fluoride-specific ion channel. Important for reducing fluoride concentration in the cell, thus reducing its toxicity. This is Fluoride-specific ion channel FluC from Escherichia coli (strain ATCC 8739 / DSM 1576 / NBRC 3972 / NCIMB 8545 / WDCM 00012 / Crooks).